A 468-amino-acid polypeptide reads, in one-letter code: Trehalose-2-sulfate acyltransferase PapA2 (468 aa).

It belongs to the PapA acyltransferase family.

It carries out the reaction 2-O-sulfo-alpha,alpha-trehalose + hexadecanoyl-CoA = 2-O-sulfo-2'-O-hexadecanoyl-alpha,alpha-trehalose + CoA. In terms of biological role, catalyzes the acylation of trehalose-2-sulfate by adding the palmitoyl group at the 2'-position to yield the intermediate trehalose-2-sulfate-2'-palmitate (SL659). The polypeptide is Trehalose-2-sulfate acyltransferase PapA2 (papA2) (Mycobacterium tuberculosis (strain ATCC 25177 / H37Ra)).